The sequence spans 276 residues: NAD-capped RNA hydrolase NudC (276 aa).

Arginine 82 lines the substrate pocket. 2 residues coordinate Zn(2+): cysteine 112 and cysteine 115. Glutamate 125 serves as a coordination point for substrate. Positions 130 and 133 each coordinate Zn(2+). Tyrosine 138 is a substrate binding site. One can recognise a Nudix hydrolase domain in the interval 139-262 (PRISPSMIVL…SIARYLIDLY (124 aa)). A divalent metal cation contacts are provided by alanine 172, glutamate 188, and glutamate 192. The Nudix box motif lies at 173–194 (GFAEPGESAEDCLVREVREEVA). Residue 206–213 (QCWPFPHS) coordinates substrate. Glutamate 233 lines the a divalent metal cation pocket. Alanine 255 contacts substrate.

Belongs to the Nudix hydrolase family. NudC subfamily. As to quaternary structure, homodimer. The cofactor is Mg(2+). Mn(2+) serves as cofactor. Zn(2+) is required as a cofactor.

It carries out the reaction a 5'-end NAD(+)-phospho-ribonucleoside in mRNA + H2O = a 5'-end phospho-adenosine-phospho-ribonucleoside in mRNA + beta-nicotinamide D-ribonucleotide + 2 H(+). It catalyses the reaction NAD(+) + H2O = beta-nicotinamide D-ribonucleotide + AMP + 2 H(+). The catalysed reaction is NADH + H2O = reduced beta-nicotinamide D-ribonucleotide + AMP + 2 H(+). In terms of biological role, mRNA decapping enzyme that specifically removes the nicotinamide adenine dinucleotide (NAD) cap from a subset of mRNAs by hydrolyzing the diphosphate linkage to produce nicotinamide mononucleotide (NMN) and 5' monophosphate mRNA. The NAD-cap is present at the 5'-end of some mRNAs and stabilizes RNA against 5'-processing. Has preference for mRNAs with a 5'-end purine. Catalyzes the hydrolysis of a broad range of dinucleotide pyrophosphates. This is NAD-capped RNA hydrolase NudC from Pseudomonas putida (strain ATCC 47054 / DSM 6125 / CFBP 8728 / NCIMB 11950 / KT2440).